A 593-amino-acid polypeptide reads, in one-letter code: Proteasome-associated ATPase (593 aa).

The stretch at 5–94 (DDADSRAARW…KEEIDRLAQP (90 aa)) forms a coiled coil. 281–286 (GCGKTL) serves as a coordination point for ATP. Positions 574-593 (GKGADAGRSIETASNTGQYL) are disordered. A compositionally biased stretch (polar residues) spans 584–593 (ETASNTGQYL). The segment at 592 to 593 (YL) is docks into pockets in the proteasome alpha-ring.

It belongs to the AAA ATPase family. Homohexamer. Assembles into a hexameric ring structure that caps the 20S proteasome core. Strongly interacts with the prokaryotic ubiquitin-like protein Pup through a hydrophobic interface; the interacting region of ARC lies in its N-terminal coiled-coil domain. There is one Pup binding site per ARC hexamer ring. Upon ATP-binding, the C-terminus of ARC interacts with the alpha-rings of the proteasome core, possibly by binding to the intersubunit pockets.

The protein operates within protein degradation; proteasomal Pup-dependent pathway. Functionally, ATPase which is responsible for recognizing, binding, unfolding and translocation of pupylated proteins into the bacterial 20S proteasome core particle. May be essential for opening the gate of the 20S proteasome via an interaction with its C-terminus, thereby allowing substrate entry and access to the site of proteolysis. Thus, the C-termini of the proteasomal ATPase may function like a 'key in a lock' to induce gate opening and therefore regulate proteolysis. The polypeptide is Proteasome-associated ATPase (Salinispora arenicola (strain CNS-205)).